An 835-amino-acid polypeptide reads, in one-letter code: BCL11 transcription factor A (835 aa).

The segment covering 1–12 has biased composition (basic residues); that stretch reads MSRRKQGKPQHL. The disordered stretch occupies residues 1–41; it reads MSRRKQGKPQHLSKREFSPEPLEAILTDDEPDHGPLGAPEG. Residues 1–210 are required for nuclear body formation and for SUMO1 recruitment; the sequence is MSRRKQGKPQ…SEHGSPLTPR (210 aa). The C2HC-type zinc-finger motif lies at 45 to 71; sequence LLTCGQCQMNFPLGDILIFIEHKRKQC. Zn(2+)-binding residues include C48, C51, H66, and C71. S86 is modified (phosphoserine). Glycyl lysine isopeptide (Lys-Gly) (interchain with G-Cter in SUMO2) cross-links involve residues K123 and K164. The C2H2-type 1 zinc finger occupies 170–193; the sequence is YTCTTCKQPFTSAWFLLQHAQNTH. S205 is subject to Phosphoserine. R271 carries the post-translational modification Asymmetric dimethylarginine. Residues 323 to 376 are disordered; that stretch reads AGNTSSPPLSPGRPSPMQRLLQPFQPGSKPPFLATPPLPPLQSAPPPSQPPVKS. 2 positions are modified to phosphoserine: S332 and S337. Positions 355-372 are enriched in pro residues; the sequence is LATPPLPPLQSAPPPSQP. 2 consecutive C2H2-type zinc fingers follow at residues 377-399 and 405-429; these read KSCEFCGKTFKFQSNLVVHRRSH and YKCNLCDHACTQASKLKRHMKTHMH. Residues 421–430 are compositionally biased toward basic residues; sequence KRHMKTHMHK. Disordered stretches follow at residues 421–458, 471–512, and 572–619; these read KRHMKTHMHKSSPMTVKSDDGLSTASSPEPGTSDLVGS, KSEN…ERVD, and RGHL…GLSK. Residues 441–450 show a composition bias toward polar residues; the sequence is GLSTASSPEP. Phosphoserine is present on residues S446 and S447. Acidic residues predominate over residues 482-506; the sequence is NGDEEEEEDDEEEEEEEEEEEEELT. The segment covering 574 to 584 has biased composition (basic and acidic residues); sequence HLAEAEGHRDT. S608 is subject to Phosphoserine. K620 participates in a covalent cross-link: Glycyl lysine isopeptide (Lys-Gly) (interchain with G-Cter in SUMO2). Phosphoserine occurs at positions 625 and 630. A Glycyl lysine isopeptide (Lys-Gly) (interchain with G-Cter in SUMO1) cross-link involves residue K634. Residues 678–740 are disordered; that stretch reads DSRQSPFASS…GRPSSKEGRR (63 aa). Residues 682–696 show a composition bias toward low complexity; the sequence is SPFASSSEHSSENGS. T701 bears the Phosphothreonine mark. A compositionally biased stretch (gly residues) spans 706 to 720; the sequence is LDGGISGRSGTGSGG. Positions 737-835 are DNA-binding; the sequence is EGRRSDTCEY…RVLNNDIKTE (99 aa). The C2H2-type 4 zinc finger occupies 742-764; sequence DTCEYCGKVFKNCSNLTVHRRSH. Zn(2+) contacts are provided by C744, C747, H760, and H764. A disordered region spans residues 765 to 769; that stretch reads TGERP. The segment at 770–792 adopts a C2H2-type 5 zinc-finger fold; that stretch reads YKCELCNYACAQSSKLTRHMKTH. Zn(2+) is bound by residues C772, C775, H788, and H792. Residues 793 to 799 form a disordered region; that stretch reads GQVGKDV. Residues 800–823 form a C2H2-type 6 zinc finger; that stretch reads YKCEICKMPFSVYSTLEKHMKKWH. The Zn(2+) site is built by C802, C805, H818, and H823. Residue K833 forms a Glycyl lysine isopeptide (Lys-Gly) (interchain with G-Cter in SUMO2) linkage.

In terms of assembly, homotetrameric; self-associates via C2HC-type zinc finger domain. Interacts with MTA2, a component of the nucleosome remodeling and deacetylase (NuRD) repressor complex. Interacts (via its C2H2-type zinc finger domains 4, 5 and 6) with promoter region of gamma-globulin. Interacts with NR2F1, PIAS3, NR2F2 and NR2F6. Isoform 1, isoform 2 and isoform 3 form homodimers and heterodimers. Isoform 2 interacts with TBR1. In terms of processing, sumoylated with SUMO1. Expressed at high levels in brain, spleen thymus, bone marrow and testis. Expressed in CD34-positive myeloid precursor cells, B-cells, monocytes and megakaryocytes. Expression is tightly regulated during B-cell development. As to expression, expressed in fetal and adult brain, and in the plasmacytoid dendritic cell.

The protein resides in the cytoplasm. Its subcellular location is the nucleus. It localises to the chromosome. It is found in the nucleus matrix. In terms of biological role, transcription factor. Associated with the BAF SWI/SNF chromatin remodeling complex. Binds to the 5'-TGACCA-3' sequence motif in regulatory regions of target genes, including a distal promoter of the HBG1 hemoglobin subunit gamma-1 gene. Involved in regulation of the developmental switch from gamma- to beta-globin, probably via direct repression of HBG1; hence indirectly repressing fetal hemoglobin (HbF) level. Involved in brain development. May play a role in hematopoiesis. Essential factor in lymphopoiesis required for B-cell formation in fetal liver. May function as a modulator of the transcriptional repression activity of NR2F2. The polypeptide is BCL11 transcription factor A (BCL11A) (Homo sapiens (Human)).